The following is a 494-amino-acid chain: MKSIMVVGTTSHAGKSLLTTAICRILSRRGWRVAPFKGQNMALNAYVTASGGEIGYAQAVQAWAAGVVPWVEMNPILLKPQGDMTSQVIIKGRSVGKVSASDYYEQYFELGWRTIEESLQHLGTEFDLLVCEGAGSPAEINLKHRDLTNMRVAKYLNAPTMLVVDIDRGGAFAHVVGTLELLEPDERALIKGVVINKFRGQRSLLDPGIKWLEERTGIPVIGVIPYLQEVFSTEDSLDLLERQSSSSKAQTDLNIAVIRLPRIANFTDFDPLESESTVSVKYLSPKQDLGHPDAVIIPGTKTTIADLLLLQKSGMAEAIQHYAASGGTVLGICGGYQMLGQIIADPEGIEGQAGRFQGLNLLPIRTVITGQKIARQRQVSSNYPQQGLPVNGFEIHQGRSRIEQQGIDPQSYHALFDDINLGLVDSCQSVWGSYLHGLFDNGPWRRAWLNRLRQQRGLKSLPTGVANYREQREQILDSLATEVESHLDLTPFLS.

The GATase cobBQ-type domain maps to 252 to 444; the sequence is DLNIAVIRLP…LHGLFDNGPW (193 aa). The active-site Nucleophile is Cys-333. The active site involves His-436.

This sequence belongs to the CobB/CobQ family. CobQ subfamily.

Its pathway is cofactor biosynthesis; adenosylcobalamin biosynthesis. Its function is as follows. Catalyzes amidations at positions B, D, E, and G on adenosylcobyrinic A,C-diamide. NH(2) groups are provided by glutamine, and one molecule of ATP is hydrogenolyzed for each amidation. This chain is Cobyric acid synthase, found in Nostoc punctiforme (strain ATCC 29133 / PCC 73102).